Here is a 92-residue protein sequence, read N- to C-terminus: RNA-binding protein Hfq (92 aa).

One can recognise a Sm domain in the interval 10–71 (DLFLNQLRKE…ISSIMPSKPI (62 aa)). The tract at residues 73–92 (YMAQAQNNQQASQQSNNNQG) is disordered. The span at 75 to 92 (AQAQNNQQASQQSNNNQG) shows a compositional bias: low complexity.

It belongs to the Hfq family. In terms of assembly, homohexamer.

RNA chaperone that binds small regulatory RNA (sRNAs) and mRNAs to facilitate mRNA translational regulation in response to envelope stress, environmental stress and changes in metabolite concentrations. Also binds with high specificity to tRNAs. The sequence is that of RNA-binding protein Hfq from Caldicellulosiruptor bescii (strain ATCC BAA-1888 / DSM 6725 / KCTC 15123 / Z-1320) (Anaerocellum thermophilum).